Reading from the N-terminus, the 266-residue chain is Probable septum site-determining protein MinC (266 aa).

A disordered region spans residues 98–146 (ILKGGRPVSDVDVPKVEPESPPAEEKKKTGKATKASGKSDEIGETDSPQ). Residues 109–124 (DVPKVEPESPPAEEKK) are compositionally biased toward basic and acidic residues.

It belongs to the MinC family. As to quaternary structure, interacts with MinD and FtsZ.

Functionally, cell division inhibitor that blocks the formation of polar Z ring septums. Rapidly oscillates between the poles of the cell to destabilize FtsZ filaments that have formed before they mature into polar Z rings. Prevents FtsZ polymerization. The chain is Probable septum site-determining protein MinC from Allorhizobium ampelinum (strain ATCC BAA-846 / DSM 112012 / S4) (Agrobacterium vitis (strain S4)).